The following is a 445-amino-acid chain: Phosphoglucosamine mutase (445 aa).

Residue Ser99 is the Phosphoserine intermediate of the active site. Mg(2+) is bound by residues Ser99, Asp242, Asp244, and Asp246. Ser99 is modified (phosphoserine).

The protein belongs to the phosphohexose mutase family. Mg(2+) serves as cofactor. Post-translationally, activated by phosphorylation.

It carries out the reaction alpha-D-glucosamine 1-phosphate = D-glucosamine 6-phosphate. Its function is as follows. Catalyzes the conversion of glucosamine-6-phosphate to glucosamine-1-phosphate. The sequence is that of Phosphoglucosamine mutase from Helicobacter pylori (strain P12).